The sequence spans 934 residues: MARRSVLYFILLNALINKGQACFCDHYAWTQWTSCSKTCNSGTQSRHRQIVVDKYYQENFCEQICSKQETRECNWQRCPINCLLGDFGPWSDCDPCVEKQSKVRSVLRPSQFGGQPCTEPLVAFQPCIPSKLCKIEEADCKNKFRCDSGRCIARKLECNGENDCGDNSDERDCGRTKAVCTRKYNPIPSVQLMGNGFHFLAGEPRGEVLDNSFTGGICKTVKSSRTSNPYRVPANLENVGFEVQTAEDDLKTDFYKDLTSLGHNENQQGSFSSQGGSSFSVPIFYSSKRSENINHNSAFKQAIQASHKKDSSFIRIHKVMKVLNFTTKAKDLHLSDVFLKALNHLPLEYNSALYSRIFDDFGTHYFTSGSLGGVYDLLYQFSSEELKNSGLTEEEAKHCVRIETKKRVLFVKKTKVEHRCTTNKLSEKHEGSFIQGAEKSISLIRGGRSEYAAALAWEKGSSGLEEKTFSEWLESVKENPAVIDFELAPIVDLVRNIPCAVTKRNNLRKALQEYAAKFDPCQCAPCPNNGRPTLSGTECLCVCQSGTYGENCEKQSPDYKSNAVDGHWGCWSSWSTCDATYKRSRTRECNNPVPQRGGKRCEGEKRQEEDCTFSIMENNGQPCINDDEEMKEVDLPEIEADSGCPQPVPPENGFIRNEKQLYSVGEDVEISCLTGFETVGYQYFRCLPDGTWRQGDVECQRRECIKPVVQEVLTITPFQRLYRIGESIELTCPKGFVVAGPSRYTCQGNSWTPPISNSLTCEKDTLTKLRGHCQLGQKQSGSECICMSPEEDCSHHSEDLCVFDTDSNDYFTSPACKFLAEKCLNNQQLHFLHIGSCQDGHQLEWGLERTRLSSNSTKKESCGYDTCYDWEKCSASTSKCVCLLPPQCFKGGNQLYCVKMGSSTSEKTLNICEVGTIRCANRKMEILHPGKCLA.

Positions M1 to A21 are cleaved as a signal peptide. Disulfide bonds link C22–C61, C24–C65, C35–C73, C39–C78, C82–C117, C93–C127, C96–C133, C140–C151, C146–C164, C158–C173, and C180–C218. TSP type-1 domains are found at residues C22–P79 and N81–K134. 2 C-linked (Man) tryptophan glycosylation sites follow: W29 and W32. An O-linked (Fuc...) threonine glycan is attached at T38. Residue W90 is glycosylated (C-linked (Man) tryptophan). Positions A138–R175 constitute an LDL-receptor class A domain. Residues L156, N159, E161, D163, D169, and E170 each coordinate Ca(2+). The region spanning T176 to Q522 is the MACPF domain. The beta stranded transmembrane segment at S278–S290 threads the bilayer. A glycan (N-linked (GlcNAc...) asparagine) is linked at N324. An O-linked (Fuc...) threonine glycan is attached at T392. 16 cysteine pairs are disulfide-bonded: C399/C420, C499/C623, C521/C570, C523/C539, C526/C541, C543/C552, C577/C611, C589/C601, C644/C686, C672/C699, C704/C746, C732/C761, C773/C823, C784/C801, C786/C837, and C793/C816. A beta stranded membrane pass occupies residues I402–K415. Positions C523–E553 constitute an EGF-like domain. The region spanning D565–T612 is the TSP type-1 3 domain. Residues W568, W571, and W574 are each glycosylated (C-linked (Man) tryptophan). CCP regions lie at residues C611–P688 and D689–T765. Sushi domains are found at residues S642–R701 and R702–K763. The C5b-binding domain stretch occupies residues S642–A934. Positions L766–G840 are factor I module (FIM) 1. Positions S780–D839 constitute a Kazal-like 1 domain. The N-linked (GlcNAc...) asparagine glycan is linked to N855. Residues K858–A934 form a factor I module (FIM) 2 region. Cystine bridges form between C862-C873, C867-C919, C880-C897, C882-C932, and C888-C912. The Kazal-like 2 domain maps to S876–A934.

It belongs to the complement C6/C7/C8/C9 family. In terms of assembly, component of the membrane attack complex (MAC), composed of complement C5b, C6, C7, C8A, C8B, C8G and multiple copies of the pore-forming subunit C9. Post-translationally, all cysteine residues are assumed to be cross-linked to one another. Individual modules containing an even number of conserved cysteine residues are supposed to have disulfide linkages only within the same module.

The protein resides in the secreted. It localises to the target cell membrane. Its activity is regulated as follows. Membrane attack complex (MAC) assembly is inhibited by CD59, thereby protecting self-cells from damage during complement activation. MAC assembly is also inhibited by clusterin (CLU) chaperones that inhibit polymerization of C9. In terms of biological role, component of the membrane attack complex (MAC), a multiprotein complex activated by the complement cascade, which inserts into a target cell membrane and forms a pore, leading to target cell membrane rupture and cell lysis. The MAC is initiated by proteolytic cleavage of C5 into complement C5b in response to the classical, alternative, lectin and GZMK complement pathways. The complement pathways consist in a cascade of proteins that leads to phagocytosis and breakdown of pathogens and signaling that strengthens the adaptive immune system. Together with component C5b, involved in MAC complex assembly: complement C5b and C6 associate with the outer leaflet of target cell membrane, reducing the energy for membrane bending. The chain is Complement component C6 (C6) from Pan troglodytes (Chimpanzee).